The following is a 446-amino-acid chain: Exodeoxyribonuclease 7 large subunit (446 aa).

This sequence belongs to the XseA family. In terms of assembly, heterooligomer composed of large and small subunits.

Its subcellular location is the cytoplasm. The enzyme catalyses Exonucleolytic cleavage in either 5'- to 3'- or 3'- to 5'-direction to yield nucleoside 5'-phosphates.. Bidirectionally degrades single-stranded DNA into large acid-insoluble oligonucleotides, which are then degraded further into small acid-soluble oligonucleotides. The sequence is that of Exodeoxyribonuclease 7 large subunit from Streptococcus thermophilus (strain ATCC BAA-250 / LMG 18311).